The chain runs to 504 residues: ATP synthase subunit beta (504 aa).

181 to 188 (GGAGVGKT) serves as a coordination point for ATP.

This sequence belongs to the ATPase alpha/beta chains family. In terms of assembly, F-type ATPases have 2 components, CF(1) - the catalytic core - and CF(0) - the membrane proton channel. CF(1) has five subunits: alpha(3), beta(3), gamma(1), delta(1), epsilon(1). CF(0) has three main subunits: a(1), b(2) and c(9-12). The alpha and beta chains form an alternating ring which encloses part of the gamma chain. CF(1) is attached to CF(0) by a central stalk formed by the gamma and epsilon chains, while a peripheral stalk is formed by the delta and b chains.

The protein resides in the cell inner membrane. The enzyme catalyses ATP + H2O + 4 H(+)(in) = ADP + phosphate + 5 H(+)(out). In terms of biological role, produces ATP from ADP in the presence of a proton gradient across the membrane. The catalytic sites are hosted primarily by the beta subunits. The chain is ATP synthase subunit beta from Ehrlichia ruminantium (strain Gardel).